Here is a 59-residue protein sequence, read N- to C-terminus: UPF0509 protein YciZ (59 aa).

It belongs to the UPF0509 family.

In Salmonella agona (strain SL483), this protein is UPF0509 protein YciZ.